The sequence spans 509 residues: Putative (R)-citramalate synthase CimA (509 aa).

A Pyruvate carboxyltransferase domain is found at 14 to 267 (VRIFDTTLRD…DTGIRTERLT (254 aa)).

Belongs to the alpha-IPM synthase/homocitrate synthase family. In terms of assembly, homodimer.

It catalyses the reaction pyruvate + acetyl-CoA + H2O = (3R)-citramalate + CoA + H(+). Its pathway is amino-acid biosynthesis; L-isoleucine biosynthesis; 2-oxobutanoate from pyruvate: step 1/3. Functionally, catalyzes the condensation of pyruvate and acetyl-coenzyme A to form (R)-citramalate. This chain is Putative (R)-citramalate synthase CimA (cimA), found in Methanopyrus kandleri (strain AV19 / DSM 6324 / JCM 9639 / NBRC 100938).